The sequence spans 523 residues: Peptide chain release factor 3 (523 aa).

A tr-type G domain is found at 10–277; it reads NKRRTFAIIS…QFVDLAPAPG (268 aa). Residues 19 to 26, 87 to 91, and 141 to 144 each bind GTP; these read SHPDAGKT, DTPGH, and NKLD.

This sequence belongs to the TRAFAC class translation factor GTPase superfamily. Classic translation factor GTPase family. PrfC subfamily.

It is found in the cytoplasm. Functionally, increases the formation of ribosomal termination complexes and stimulates activities of RF-1 and RF-2. It binds guanine nucleotides and has strong preference for UGA stop codons. It may interact directly with the ribosome. The stimulation of RF-1 and RF-2 is significantly reduced by GTP and GDP, but not by GMP. The polypeptide is Peptide chain release factor 3 (Lactobacillus delbrueckii subsp. bulgaricus (strain ATCC BAA-365 / Lb-18)).